Reading from the N-terminus, the 2380-residue chain is Probable polyketide synthase 25 (2380 aa).

The segment covering Met-1–Lys-18 has biased composition (polar residues). The interval Met-1–Asn-29 is disordered. One can recognise a Ketosynthase family 3 (KS3) domain in the interval Asp-31–Gln-457. Active-site for beta-ketoacyl synthase activity residues include Cys-198, His-340, and His-380. An acyl/malonyl transferase region spans residues Gly-649–Tyr-682. Ser-659 acts as the For acyl/malonyl transferase activity in catalysis. The N-terminal hotdog fold stretch occupies residues Ile-948 to Lys-1070. A PKS/mFAS DH domain is found at Ile-948–Pro-1234. The active-site Proton acceptor; for dehydratase activity is His-982. The C-terminal hotdog fold stretch occupies residues Asn-1085–Pro-1234. Residue Asp-1148 is the Proton donor; for dehydratase activity of the active site. The Carrier domain maps to Lys-2299–Phe-2376. O-(pantetheine 4'-phosphoryl)serine is present on Ser-2336.

Pantetheine 4'-phosphate is required as a cofactor.

Its function is as follows. Probable polyketide synthase. This chain is Probable polyketide synthase 25 (pks25), found in Dictyostelium discoideum (Social amoeba).